Here is a 156-residue protein sequence, read N- to C-terminus: Ribosomal RNA large subunit methyltransferase H (156 aa).

S-adenosyl-L-methionine-binding positions include L73, G104, and 123–128 (LSPLTL).

It belongs to the RNA methyltransferase RlmH family. Homodimer.

It is found in the cytoplasm. It catalyses the reaction pseudouridine(1915) in 23S rRNA + S-adenosyl-L-methionine = N(3)-methylpseudouridine(1915) in 23S rRNA + S-adenosyl-L-homocysteine + H(+). Specifically methylates the pseudouridine at position 1915 (m3Psi1915) in 23S rRNA. This Pectobacterium atrosepticum (strain SCRI 1043 / ATCC BAA-672) (Erwinia carotovora subsp. atroseptica) protein is Ribosomal RNA large subunit methyltransferase H.